A 715-amino-acid polypeptide reads, in one-letter code: Lactococcin-A transport/processing ATP-binding protein LcnC (715 aa).

The 128-residue stretch at glutamine 11–leucine 138 folds into the Peptidase C39 domain. Cysteine 17 is an active-site residue. 6 helical membrane passes run valine 167–tyrosine 187, isoleucine 197–isoleucine 217, leucine 237–phenylalanine 257, threonine 282–leucine 302, leucine 307–proline 327, and alanine 396–serine 416. The ABC transmembrane type-1 domain maps to isoleucine 168 to lysine 450. Residues leucine 482 to asparagine 715 enclose the ABC transporter domain. Glycine 515–serine 522 lines the ATP pocket.

The protein belongs to the ABC transporter superfamily. Bacteriocin (lactococcin) exporter (TC 3.A.1.112.3) family.

Its subcellular location is the cell membrane. Its function is as follows. Involved in the export process of the bacteriocin lactococcin A. This chain is Lactococcin-A transport/processing ATP-binding protein LcnC (lcnC), found in Lactococcus lactis subsp. lactis (Streptococcus lactis).